The sequence spans 497 residues: Acetyl-coenzyme A carboxylase carboxyl transferase subunit beta, chloroplastic (497 aa).

Residues leucine 225–aspartate 497 form the CoA carboxyltransferase N-terminal domain. Residues cysteine 229, cysteine 232, cysteine 248, and cysteine 251 each coordinate Zn(2+). The segment at cysteine 229–cysteine 251 adopts a C4-type zinc-finger fold.

The protein belongs to the AccD/PCCB family. Acetyl-CoA carboxylase is a heterohexamer composed of biotin carboxyl carrier protein, biotin carboxylase and 2 subunits each of ACCase subunit alpha and ACCase plastid-coded subunit beta (accD). Zn(2+) serves as cofactor.

The protein localises to the plastid. It is found in the chloroplast stroma. It carries out the reaction N(6)-carboxybiotinyl-L-lysyl-[protein] + acetyl-CoA = N(6)-biotinyl-L-lysyl-[protein] + malonyl-CoA. It functions in the pathway lipid metabolism; malonyl-CoA biosynthesis; malonyl-CoA from acetyl-CoA: step 1/1. Component of the acetyl coenzyme A carboxylase (ACC) complex. Biotin carboxylase (BC) catalyzes the carboxylation of biotin on its carrier protein (BCCP) and then the CO(2) group is transferred by the transcarboxylase to acetyl-CoA to form malonyl-CoA. This chain is Acetyl-coenzyme A carboxylase carboxyl transferase subunit beta, chloroplastic, found in Phalaenopsis aphrodite subsp. formosana (Moth orchid).